Reading from the N-terminus, the 246-residue chain is 1-(5-phosphoribosyl)-5-[(5-phosphoribosylamino)methylideneamino] imidazole-4-carboxamide isomerase (246 aa).

The Proton acceptor role is filled by Asp10.

The protein belongs to the HisA/HisF family.

It localises to the cytoplasm. It catalyses the reaction 1-(5-phospho-beta-D-ribosyl)-5-[(5-phospho-beta-D-ribosylamino)methylideneamino]imidazole-4-carboxamide = 5-[(5-phospho-1-deoxy-D-ribulos-1-ylimino)methylamino]-1-(5-phospho-beta-D-ribosyl)imidazole-4-carboxamide. The protein operates within amino-acid biosynthesis; L-histidine biosynthesis; L-histidine from 5-phospho-alpha-D-ribose 1-diphosphate: step 4/9. This chain is 1-(5-phosphoribosyl)-5-[(5-phosphoribosylamino)methylideneamino] imidazole-4-carboxamide isomerase, found in Corynebacterium efficiens (strain DSM 44549 / YS-314 / AJ 12310 / JCM 11189 / NBRC 100395).